A 740-amino-acid polypeptide reads, in one-letter code: Ion-translocating oxidoreductase complex subunit C (740 aa).

4Fe-4S ferredoxin-type domains lie at 369 to 397 (GEPQ…QQLY) and 407 to 436 (KATT…VQYF). Positions 377, 380, 383, 387, 416, 419, 422, and 426 each coordinate [4Fe-4S] cluster. 3 disordered regions span residues 602–652 (KLEQ…DPRK), 664–685 (ARKL…PRKA), and 695–714 (KARK…QVDP). The span at 605–615 (QQQANAEPEQQ) shows a compositional bias: low complexity.

This sequence belongs to the 4Fe4S bacterial-type ferredoxin family. RnfC subfamily. As to quaternary structure, the complex is composed of six subunits: RsxA, RsxB, RsxC, RsxD, RsxE and RsxG. Requires [4Fe-4S] cluster as cofactor.

It localises to the cell inner membrane. Its function is as follows. Part of a membrane-bound complex that couples electron transfer with translocation of ions across the membrane. Required to maintain the reduced state of SoxR. The protein is Ion-translocating oxidoreductase complex subunit C of Escherichia coli O157:H7.